We begin with the raw amino-acid sequence, 347 residues long: MDSFVSTYLWPALIMIGQSLLLLVCLLVFIAYILLADRKIWAAVQLRRGPNVVGPFGLFQSFADLLKFMVKEPIIPAGANKAVFLLAPLVSVVLALSTWAVVPVANGWVIANINVGILYILAISSLEVYGIIMGGWASNSKYPFLGALRSAAQMVSYEVSIGLVIVTVLLCVGSLNLTDIVMSQQTGLGTKLGLPASFLDWHWLSLFPMFIVFFISALAETNRPPFDLPEAESELVAGFMVEYGSAPYMMFMLGEYAAVVLMCSLTTILFLGGWLPPVDIWILSWVPGIIWFMLKACFVFFMFAMVKAFVPRYRYDQLMRLGWKVFLPLSLAMVVIVAFVLKLTGWA.

8 helical membrane-spanning segments follow: residues 13–33 (LIMI…IAYI), 82–102 (AVFL…WAVV), 115–135 (VGIL…IMGG), 161–181 (IGLV…TDIV), 198–218 (FLDW…ISAL), 258–278 (AVVL…LPPV), 286–306 (VPGI…FAMV), and 321–341 (LGWK…AFVL).

This sequence belongs to the complex I subunit 1 family. As to quaternary structure, NDH-1 is composed of 14 different subunits. Subunits NuoA, H, J, K, L, M, N constitute the membrane sector of the complex.

It is found in the cell inner membrane. It catalyses the reaction a quinone + NADH + 5 H(+)(in) = a quinol + NAD(+) + 4 H(+)(out). In terms of biological role, NDH-1 shuttles electrons from NADH, via FMN and iron-sulfur (Fe-S) centers, to quinones in the respiratory chain. The immediate electron acceptor for the enzyme in this species is believed to be ubiquinone. Couples the redox reaction to proton translocation (for every two electrons transferred, four hydrogen ions are translocated across the cytoplasmic membrane), and thus conserves the redox energy in a proton gradient. This subunit may bind ubiquinone. This chain is NADH-quinone oxidoreductase subunit H, found in Rhizobium rhizogenes (strain K84 / ATCC BAA-868) (Agrobacterium radiobacter).